Reading from the N-terminus, the 101-residue chain is Urease subunit beta (101 aa).

The protein belongs to the urease beta subunit family. As to quaternary structure, heterotrimer of UreA (gamma), UreB (beta) and UreC (alpha) subunits. Three heterotrimers associate to form the active enzyme.

It localises to the cytoplasm. It catalyses the reaction urea + 2 H2O + H(+) = hydrogencarbonate + 2 NH4(+). It functions in the pathway nitrogen metabolism; urea degradation; CO(2) and NH(3) from urea (urease route): step 1/1. This Variovorax paradoxus (strain S110) protein is Urease subunit beta.